The primary structure comprises 597 residues: Kelch-like protein 21 (597 aa).

The BTB domain occupies 35 to 103; it reads LDVTLEAAGG…SYTGRVAVSG (69 aa). The region spanning 138–239 is the BACK domain; sequence CLDMQDFAEA…RRFYLLAHVE (102 aa). Kelch repeat units follow at residues 287-335, 336-382, 384-422, 423-470, 472-512, and 513-560; these read ILVL…ALGN, DIYV…VLDG, LYVV…ACRG, RLYA…TLNG, MYFV…VLGG, and KLYV…SIFR. The segment at 570-597 is disordered; that stretch reads GRGFELDSGSDDMDPGRPRPPRDPDELH. A compositionally biased stretch (basic and acidic residues) spans 583-597; the sequence is DPGRPRPPRDPDELH.

Component of the BCR(KLHL21) E3 ubiquitin ligase complex, at least composed of CUL3, KLHL21 and RBX1.

The protein localises to the cytoplasm. It localises to the cytoskeleton. The protein resides in the spindle. It participates in protein modification; protein ubiquitination. In terms of biological role, substrate-specific adapter of a BCR (BTB-CUL3-RBX1) E3 ubiquitin-protein ligase complex required for efficient chromosome alignment and cytokinesis. The BCR(KLHL21) E3 ubiquitin ligase complex regulates localization of the chromosomal passenger complex (CPC) from chromosomes to the spindle midzone in anaphase and mediates the ubiquitination of AURKB. Ubiquitination of AURKB by BCR(KLHL21) E3 ubiquitin ligase complex may not lead to its degradation by the proteasome. The chain is Kelch-like protein 21 (KLHL21) from Homo sapiens (Human).